Consider the following 201-residue polypeptide: 2-phospho-L-lactate guanylyltransferase (201 aa).

This sequence belongs to the CofC family. Homodimer.

The catalysed reaction is (2S)-2-phospholactate + GTP + H(+) = (2S)-lactyl-2-diphospho-5'-guanosine + diphosphate. It participates in cofactor biosynthesis; coenzyme F420 biosynthesis. In terms of biological role, guanylyltransferase that catalyzes the activation of (2S)-2-phospholactate (2-PL) as (2S)-lactyl-2-diphospho-5'-guanosine, via the condensation of 2-PL with GTP. It is involved in the biosynthesis of coenzyme F420, a hydride carrier cofactor. This Natronomonas pharaonis (strain ATCC 35678 / DSM 2160 / CIP 103997 / JCM 8858 / NBRC 14720 / NCIMB 2260 / Gabara) (Halobacterium pharaonis) protein is 2-phospho-L-lactate guanylyltransferase.